The following is a 291-amino-acid chain: Protease HtpX homolog (291 aa).

The next 2 membrane-spanning stretches (helical) occupy residues 4 to 24 and 38 to 58; these read IVLF…SARL and MGML…ISLM. His-144 is a binding site for Zn(2+). Residue Glu-145 is part of the active site. His-148 is a Zn(2+) binding site. 2 consecutive transmembrane segments (helical) span residues 152–172 and 199–219; these read GDMV…IFLA and VSSI…VMFF. Glu-224 lines the Zn(2+) pocket.

It belongs to the peptidase M48B family. Zn(2+) is required as a cofactor.

Its subcellular location is the cell inner membrane. The sequence is that of Protease HtpX homolog from Prosthecochloris aestuarii (strain DSM 271 / SK 413).